A 125-amino-acid chain; its full sequence is Holo-[acyl-carrier-protein] synthase (125 aa).

Residues aspartate 8 and glutamate 57 each coordinate Mg(2+).

It belongs to the P-Pant transferase superfamily. AcpS family. The cofactor is Mg(2+).

It is found in the cytoplasm. The catalysed reaction is apo-[ACP] + CoA = holo-[ACP] + adenosine 3',5'-bisphosphate + H(+). Functionally, transfers the 4'-phosphopantetheine moiety from coenzyme A to a Ser of acyl-carrier-protein. This Koribacter versatilis (strain Ellin345) protein is Holo-[acyl-carrier-protein] synthase.